The chain runs to 75 residues: Protein BRICK1 (75 aa).

Position 2 is an N-acetylalanine (Ala2). Residues 41 to 72 (MSCRSRLATLNEKLTALERRIEYIEARVTKGE) adopt a coiled-coil conformation.

Belongs to the BRK1 family. Homotrimer when in free form. Directly interacts with WASF2. Component of the WAVE1 complex composed of ABI2, CYFIP1 or CYFIP2, BRK1, NCKAP1 and WASF1/WAVE1. Within the complex, a heterodimer containing NCKAP1 and CYFIP1 interacts with a heterotrimer formed by WAVE1, ABI2 and BRK1.

The protein resides in the cytoplasm. It is found in the cytoskeleton. In terms of biological role, involved in regulation of actin and microtubule organization. Part of a WAVE complex that activates the Arp2/3 complex. As component of the WAVE1 complex, required for BDNF-NTRK2 endocytic trafficking and signaling from early endosomes. This Homo sapiens (Human) protein is Protein BRICK1 (BRK1).